A 429-amino-acid chain; its full sequence is Adenylosuccinate synthetase (429 aa).

GTP is bound by residues 12 to 18 (GDEGKGK) and 40 to 42 (GHT). The active-site Proton acceptor is the Asp-13. Residues Asp-13 and Gly-40 each contribute to the Mg(2+) site. IMP is bound by residues 13 to 16 (DEGK), 38 to 41 (NAGH), Thr-128, Arg-142, Gln-223, Thr-238, and Arg-302. His-41 serves as the catalytic Proton donor. 298–304 (TVTKRPR) serves as a coordination point for substrate. GTP-binding positions include Arg-304, 330-332 (CLD), and 412-414 (SVG).

It belongs to the adenylosuccinate synthetase family. As to quaternary structure, homodimer. It depends on Mg(2+) as a cofactor.

The protein resides in the cytoplasm. It carries out the reaction IMP + L-aspartate + GTP = N(6)-(1,2-dicarboxyethyl)-AMP + GDP + phosphate + 2 H(+). Its pathway is purine metabolism; AMP biosynthesis via de novo pathway; AMP from IMP: step 1/2. Functionally, plays an important role in the de novo pathway of purine nucleotide biosynthesis. Catalyzes the first committed step in the biosynthesis of AMP from IMP. This is Adenylosuccinate synthetase from Lactiplantibacillus plantarum (strain ATCC BAA-793 / NCIMB 8826 / WCFS1) (Lactobacillus plantarum).